The following is a 263-amino-acid chain: MSLVAEAFVSQIAATEPWPENATLYQQLRGEQILLSDNAASLAVQAFLQMCNLPVKVVCRANAEYMSPSGKVPFIHVGNQVVSELGPIVQFVKAKGHSLSDGLDEVQKAEMKAYMELVNNMLLTAELYLQWCDEATVGEITIARYGSPYPWPLNHILAYQKQWEVKRKMKAIGWGNKTLDQVLEDVDQCCQALSQRLGTQPYFFNKQPTELDALVFGHLYTILTTQLTSDELSEKVKNYSNLLAFCRRIEQHYFEDWGKGRLS.

Serine 2 carries the N-acetylserine modification.

Belongs to the metaxin family. In terms of assembly, interacts with MTX1/metaxin-1. Associates with the mitochondrial contact site and cristae organizing system (MICOS) complex, composed of at least MICOS10/MIC10, CHCHD3/MIC19, CHCHD6/MIC25, APOOL/MIC27, IMMT/MIC60, APOO/MIC23/MIC26 and QIL1/MIC13. This complex was also known under the names MINOS or MitOS complex. The MICOS complex associates with mitochondrial outer membrane proteins SAMM50, MTX1 and MTX2 (together described as components of the mitochondrial outer membrane sorting assembly machinery (SAM) complex) and DNAJC11, mitochondrial inner membrane protein TMEM11 and with HSPA9. The MICOS and SAM complexes together with DNAJC11 are part of a large protein complex spanning both membranes termed the mitochondrial intermembrane space bridging (MIB) complex.

The protein localises to the mitochondrion outer membrane. Its subcellular location is the mitochondrion. Functionally, involved in transport of proteins into the mitochondrion. This is Metaxin-2 (Mtx2) from Mus musculus (Mouse).